We begin with the raw amino-acid sequence, 288 residues long: MAEKKQWHETLHDQFGQYFAVDNVLYHEKTDHQDLIIFENAAFGRVMALDGVVQTTERDEFIYHEMMTHVPLLAHGHAKHVLIIGGGDGAMLREVTRHKNVESITMVEIDAGVVSFCRQYLPNHNADSYDDPRFKLVIDDGVNFVNQTSQTFDVIISDCTDPIGPGESLFTSAFYEGCKRCLNPSGIFVAQNGVCFLQQEEAIDSHRKLSHYFSDVGFYQAAIPTYYGGIMTFAWATDNDALRHLSTEIIQARFLASGLKCRYYNPAIHTAAFALPQYLQDALASQPS.

The region spanning Glu9 to Asp238 is the PABS domain. Position 33 (Gln33) interacts with S-methyl-5'-thioadenosine. His64 and Asp88 together coordinate spermidine. S-methyl-5'-thioadenosine contacts are provided by residues Glu108 and Asp140–Gly141. Asp158 (proton acceptor) is an active-site residue. Asp158–Asp161 provides a ligand contact to spermidine. Pro165 is a binding site for S-methyl-5'-thioadenosine.

This sequence belongs to the spermidine/spermine synthase family. In terms of assembly, homodimer or homotetramer.

Its subcellular location is the cytoplasm. It carries out the reaction S-adenosyl 3-(methylsulfanyl)propylamine + putrescine = S-methyl-5'-thioadenosine + spermidine + H(+). The protein operates within amine and polyamine biosynthesis; spermidine biosynthesis; spermidine from putrescine: step 1/1. Catalyzes the irreversible transfer of a propylamine group from the amino donor S-adenosylmethioninamine (decarboxy-AdoMet) to putrescine (1,4-diaminobutane) to yield spermidine. This Shigella boydii serotype 4 (strain Sb227) protein is Polyamine aminopropyltransferase.